The chain runs to 118 residues: Vitelline membrane protein Vm32E (118 aa).

Residues 1–17 form the signal peptide; sequence MKIVALTLVAFVALAGA. The VM domain maps to 36–75; sequence GYPAPPCPTNYLFSCQPNLAPAPCAQEAQAPAYGSAGAYT.

Belongs to the vitelline membrane family.

The protein resides in the secreted. In terms of biological role, major early eggshell protein. The polypeptide is Vitelline membrane protein Vm32E (Drosophila sechellia (Fruit fly)).